The following is a 360-amino-acid chain: Mitogen-activated protein kinase 1 (360 aa).

Alanine 2 is subject to N-acetylalanine. Residues 25 to 313 (YTNLSYIGEG…VEQALAHPYL (289 aa)) enclose the Protein kinase domain. A Phosphoserine; by SGK1 modification is found at serine 29. ATP-binding positions include 31–39 (IGEGAYGMV) and lysine 54. The Proton acceptor role is filled by aspartate 149. Threonine 185 bears the Phosphothreonine; by MAP2K1 and MAP2K2 mark. Residues 185–187 (TEY) carry the TXY motif. Residue tyrosine 187 is modified to Phosphotyrosine; by MAP2K1 and MAP2K2. Position 190 is a phosphothreonine; by autocatalysis (threonine 190). Serine 246 and serine 248 each carry phosphoserine. Residues 259 to 277 (KARNYLLSLPHKNKVPWNR) mediate DNA binding. Serine 284 is modified (phosphoserine). Residues 318-322 (DPSDE) carry the Cytoplasmic retention motif motif. Positions 327–333 (APFKFDM) match the Nuclear translocation motif motif.

This sequence belongs to the protein kinase superfamily. CMGC Ser/Thr protein kinase family. MAP kinase subfamily. Binds both upstream activators and downstream substrates in multimolecular complexes. This interaction inhibits its tyrosine-kinase activity. Interacts with ADAM15, ARHGEF2, ARRB2, DAPK1 (via death domain), HSF4, IER3, IPO7, NISCH, SGK1, and isoform 1 of NEK2. Interacts (via phosphorylated form) with TPR (via C-terminal region and phosphorylated form); the interaction requires dimerization of MAPK1/ERK2 and increases following EGF stimulation. Interacts with MAP2K1. Interacts with DUSP6. Interacts (phosphorylated form) with CAV2 ('Tyr-19'-phosphorylated form); the interaction, promoted by insulin, leads to nuclear location and MAPK1 activation. Interacts with MORG1, PEA15 and MKNK2. MKNK2 isoform 1 binding prevents from dephosphorylation and inactivation. Interacts with DCC. The phosphorylated form interacts with PML (isoform PML-4). Interacts with STYX. Interacts with CDK2AP2. Interacts with CAVIN4. Interacts with DUSP7; the interaction enhances DUSP7 phosphatase activity. Interacts with GIT1; this interaction is necessary for MAPK1 localization to focal adhesions. Interacts with ZNF263. Interacts with phosphoglycerate kinase PGK1; the interaction is direct, occurs under hypoxic conditions, and promotes interaction between PGK1 and PIN1. In terms of assembly, (Microbial infection) Interacts with HIV-1 Nef through its SH3 domain. Requires Mg(2+) as cofactor. Post-translationally, phosphorylated upon KIT and FLT3 signaling. Dually phosphorylated on Thr-185 and Tyr-187, which activates the enzyme. Undergoes regulatory phosphorylation on additional residues such as Ser-246 and Ser-248 in the kinase insert domain (KID) These phosphorylations, which are probably mediated by more than one kinase, are important for binding of MAPK1/ERK2 to importin-7 (IPO7) and its nuclear translocation. In addition, autophosphorylation of Thr-190 was shown to affect the subcellular localization of MAPK1/ERK2 as well. Ligand-activated ALK induces tyrosine phosphorylation. Dephosphorylated by PTPRJ at Tyr-187. Phosphorylation on Ser-29 by SGK1 results in its activation by enhancing its interaction with MAP2K1/MEK1 and MAP2K2/MEK2. DUSP3 and DUSP6 dephosphorylate specifically MAPK1/ERK2 and MAPK3/ERK1 whereas DUSP9 dephosphorylates a broader range of MAPKs. Dephosphorylated by DUSP1 and DUSP2 at Thr-185 and Tyr-187. In terms of processing, ISGylated. Ubiquitinated by TRIM15 via 'Lys-63'-linked ubiquitination; leading to activation. Deubiquitinated by CYLD.

It localises to the cytoplasm. Its subcellular location is the cytoskeleton. The protein localises to the spindle. The protein resides in the nucleus. It is found in the microtubule organizing center. It localises to the centrosome. Its subcellular location is the membrane. The protein localises to the caveola. The protein resides in the cell junction. It is found in the focal adhesion. The catalysed reaction is L-seryl-[protein] + ATP = O-phospho-L-seryl-[protein] + ADP + H(+). It carries out the reaction L-threonyl-[protein] + ATP = O-phospho-L-threonyl-[protein] + ADP + H(+). With respect to regulation, phosphorylated by MAP2K1/MEK1 and MAP2K2/MEK2 on Thr-185 and Tyr-187 in response to external stimuli like insulin or NGF. Both phosphorylations are required for activity. This phosphorylation causes dramatic conformational changes, which enable full activation and interaction of MAPK1/ERK2 with its substrates. Phosphorylation on Ser-29 by SGK1 results in its activation by enhancing its interaction with MAP2K1/MEK1 and MAP2K2/MEK2. Dephosphorylated and inactivated by DUSP1, DUSP3, DUSP6 and DUSP9. Inactivated by pyrimidylpyrrole inhibitors. Its function is as follows. Serine/threonine kinase which acts as an essential component of the MAP kinase signal transduction pathway. MAPK1/ERK2 and MAPK3/ERK1 are the 2 MAPKs which play an important role in the MAPK/ERK cascade. They participate also in a signaling cascade initiated by activated KIT and KITLG/SCF. Depending on the cellular context, the MAPK/ERK cascade mediates diverse biological functions such as cell growth, adhesion, survival and differentiation through the regulation of transcription, translation, cytoskeletal rearrangements. The MAPK/ERK cascade also plays a role in initiation and regulation of meiosis, mitosis, and postmitotic functions in differentiated cells by phosphorylating a number of transcription factors. About 160 substrates have already been discovered for ERKs. Many of these substrates are localized in the nucleus, and seem to participate in the regulation of transcription upon stimulation. However, other substrates are found in the cytosol as well as in other cellular organelles, and those are responsible for processes such as translation, mitosis and apoptosis. Moreover, the MAPK/ERK cascade is also involved in the regulation of the endosomal dynamics, including lysosome processing and endosome cycling through the perinuclear recycling compartment (PNRC); as well as in the fragmentation of the Golgi apparatus during mitosis. The substrates include transcription factors (such as ATF2, BCL6, ELK1, ERF, FOS, HSF4 or SPZ1), cytoskeletal elements (such as CANX, CTTN, GJA1, MAP2, MAPT, PXN, SORBS3 or STMN1), regulators of apoptosis (such as BAD, BTG2, CASP9, DAPK1, IER3, MCL1 or PPARG), regulators of translation (such as EIF4EBP1 and FXR1) and a variety of other signaling-related molecules (like ARHGEF2, DCC, FRS2 or GRB10). Protein kinases (such as RAF1, RPS6KA1/RSK1, RPS6KA3/RSK2, RPS6KA2/RSK3, RPS6KA6/RSK4, SYK, MKNK1/MNK1, MKNK2/MNK2, RPS6KA5/MSK1, RPS6KA4/MSK2, MAPKAPK3 or MAPKAPK5) and phosphatases (such as DUSP1, DUSP4, DUSP6 or DUSP16) are other substrates which enable the propagation the MAPK/ERK signal to additional cytosolic and nuclear targets, thereby extending the specificity of the cascade. Mediates phosphorylation of TPR in response to EGF stimulation. May play a role in the spindle assembly checkpoint. Phosphorylates PML and promotes its interaction with PIN1, leading to PML degradation. Phosphorylates CDK2AP2. Phosphorylates phosphoglycerate kinase PGK1 under hypoxic conditions to promote its targeting to the mitochondrion and suppress the formation of acetyl-coenzyme A from pyruvate. Acts as a transcriptional repressor. Binds to a [GC]AAA[GC] consensus sequence. Repress the expression of interferon gamma-induced genes. Seems to bind to the promoter of CCL5, DMP1, IFIH1, IFITM1, IRF7, IRF9, LAMP3, OAS1, OAS2, OAS3 and STAT1. Transcriptional activity is independent of kinase activity. This Homo sapiens (Human) protein is Mitogen-activated protein kinase 1.